The following is a 329-amino-acid chain: Ketol-acid reductoisomerase (NADP(+)) (329 aa).

Residues 2-182 form the KARI N-terminal Rossmann domain; sequence TQLFYDTDAD…GGTRAGILET (181 aa). NADP(+)-binding positions include 25-28, Ser-51, Ser-53, and 83-86; these read YGSQ and DEFQ. His-108 is a catalytic residue. NADP(+) is bound at residue Gly-134. The KARI C-terminal knotted domain maps to 183 to 328; that stretch reads NFKEETETDL…KGLRSMFSWL (146 aa). Mg(2+) contacts are provided by Asp-191, Glu-195, Glu-227, and Glu-231. Ser-252 is a binding site for substrate.

The protein belongs to the ketol-acid reductoisomerase family. Requires Mg(2+) as cofactor.

It carries out the reaction (2R)-2,3-dihydroxy-3-methylbutanoate + NADP(+) = (2S)-2-acetolactate + NADPH + H(+). It catalyses the reaction (2R,3R)-2,3-dihydroxy-3-methylpentanoate + NADP(+) = (S)-2-ethyl-2-hydroxy-3-oxobutanoate + NADPH + H(+). The protein operates within amino-acid biosynthesis; L-isoleucine biosynthesis; L-isoleucine from 2-oxobutanoate: step 2/4. Its pathway is amino-acid biosynthesis; L-valine biosynthesis; L-valine from pyruvate: step 2/4. Its function is as follows. Involved in the biosynthesis of branched-chain amino acids (BCAA). Catalyzes an alkyl-migration followed by a ketol-acid reduction of (S)-2-acetolactate (S2AL) to yield (R)-2,3-dihydroxy-isovalerate. In the isomerase reaction, S2AL is rearranged via a Mg-dependent methyl migration to produce 3-hydroxy-3-methyl-2-ketobutyrate (HMKB). In the reductase reaction, this 2-ketoacid undergoes a metal-dependent reduction by NADPH to yield (R)-2,3-dihydroxy-isovalerate. The protein is Ketol-acid reductoisomerase (NADP(+)) of Prochlorococcus marinus (strain MIT 9215).